Reading from the N-terminus, the 254-residue chain is NH(3)-dependent NAD(+) synthetase (254 aa).

29-36 (GLSGGIDS) contacts ATP. Asp-35 contributes to the Mg(2+) binding site. Position 115 (Arg-115) interacts with deamido-NAD(+). Residue Thr-135 participates in ATP binding. A Mg(2+)-binding site is contributed by Glu-140. Lys-148 and Asp-155 together coordinate deamido-NAD(+). Residues Lys-164 and Ser-186 each coordinate ATP. 245–246 (HK) provides a ligand contact to deamido-NAD(+).

It belongs to the NAD synthetase family. As to quaternary structure, homodimer.

It catalyses the reaction deamido-NAD(+) + NH4(+) + ATP = AMP + diphosphate + NAD(+) + H(+). It participates in cofactor biosynthesis; NAD(+) biosynthesis; NAD(+) from deamido-NAD(+) (ammonia route): step 1/1. Its function is as follows. Catalyzes the ATP-dependent amidation of deamido-NAD to form NAD. Uses ammonia as a nitrogen source. The polypeptide is NH(3)-dependent NAD(+) synthetase (Methanococcus aeolicus (strain ATCC BAA-1280 / DSM 17508 / OCM 812 / Nankai-3)).